Here is a 353-residue protein sequence, read N- to C-terminus: MTQRKIIHVDCDCFYAAIEMRDDPSLAGKPLAVGGSADRRGVIATCNYEARAYGVRSAMSSGHALKLCPDLTIVKPRMDAYREASKEIHTIFSDYTDLIEPLSLDEAYLDVSDSAHFGGSATRIAQDIRRRVSNQLHITVSAGVAPNKFLAKIASDWRKPNGLFVITPDQVEEFVSGLPVSKLHGVGKVTADKLGKLGINDCLQLREWDKLALVREFGSFGERLWSLARGIDERLVHNDSRRQSISVENTYDVDLPDLRSCLDKLPELLETLKTRMARIDSSYRPGKPFVKVKFHDFTQTTLEQAGAGRDLGSYQLMLTQAFNRGGKPVRLLGVGVRLEDLRGGFEQMELFER.

Residues Ile-6 to Gly-187 form the UmuC domain. Positions 10 and 105 each coordinate Mg(2+). The active site involves Glu-106.

It belongs to the DNA polymerase type-Y family. In terms of assembly, monomer. The cofactor is Mg(2+).

The protein resides in the cytoplasm. It catalyses the reaction DNA(n) + a 2'-deoxyribonucleoside 5'-triphosphate = DNA(n+1) + diphosphate. Poorly processive, error-prone DNA polymerase involved in untargeted mutagenesis. Copies undamaged DNA at stalled replication forks, which arise in vivo from mismatched or misaligned primer ends. These misaligned primers can be extended by PolIV. Exhibits no 3'-5' exonuclease (proofreading) activity. May be involved in translesional synthesis, in conjunction with the beta clamp from PolIII. The chain is DNA polymerase IV from Pseudomonas fluorescens (strain Pf0-1).